Consider the following 691-residue polypeptide: DNA ligase (691 aa).

NAD(+)-binding positions include 36-40, 85-86, and Glu-118; these read DAEYD and SL. The active-site N6-AMP-lysine intermediate is the Lys-120. Residues Arg-141, Glu-178, Lys-295, and Lys-319 each contribute to the NAD(+) site. Zn(2+) contacts are provided by Cys-413, Cys-416, Cys-431, and Cys-437. In terms of domain architecture, BRCT spans 595–684; that stretch reads GRPQPLAGQT…ESASSEDAQP (90 aa).

This sequence belongs to the NAD-dependent DNA ligase family. LigA subfamily. Mg(2+) serves as cofactor. Mn(2+) is required as a cofactor.

It carries out the reaction NAD(+) + (deoxyribonucleotide)n-3'-hydroxyl + 5'-phospho-(deoxyribonucleotide)m = (deoxyribonucleotide)n+m + AMP + beta-nicotinamide D-nucleotide.. DNA ligase that catalyzes the formation of phosphodiester linkages between 5'-phosphoryl and 3'-hydroxyl groups in double-stranded DNA using NAD as a coenzyme and as the energy source for the reaction. It is essential for DNA replication and repair of damaged DNA. In Chromohalobacter salexigens (strain ATCC BAA-138 / DSM 3043 / CIP 106854 / NCIMB 13768 / 1H11), this protein is DNA ligase.